Reading from the N-terminus, the 434-residue chain is D-inositol 3-phosphate glycosyltransferase (434 aa).

Position 19 (His19) interacts with 1D-myo-inositol 3-phosphate. UDP-N-acetyl-alpha-D-glucosamine-binding positions include 25–26 and Gly33; that span reads QP. 1D-myo-inositol 3-phosphate contacts are provided by residues 30–35, Lys88, Tyr121, Thr145, and Arg165; that span reads DAGGMN. Positions 239, 244, and 297 each coordinate UDP-N-acetyl-alpha-D-glucosamine. Residues Tyr306, Arg307, and Ala309 each coordinate Mg(2+). The UDP-N-acetyl-alpha-D-glucosamine site is built by Glu319 and Glu327. Residue Thr333 participates in Mg(2+) binding. Positions 414–434 are disordered; sequence HPRPAARRSGRRFSMRRGVRT.

Belongs to the glycosyltransferase group 1 family. MshA subfamily. In terms of assembly, homodimer.

The enzyme catalyses 1D-myo-inositol 3-phosphate + UDP-N-acetyl-alpha-D-glucosamine = 1D-myo-inositol 2-acetamido-2-deoxy-alpha-D-glucopyranoside 3-phosphate + UDP + H(+). Its function is as follows. Catalyzes the transfer of a N-acetyl-glucosamine moiety to 1D-myo-inositol 3-phosphate to produce 1D-myo-inositol 2-acetamido-2-deoxy-glucopyranoside 3-phosphate in the mycothiol biosynthesis pathway. The protein is D-inositol 3-phosphate glycosyltransferase (mshA) of Mycolicibacterium smegmatis (strain ATCC 700084 / mc(2)155) (Mycobacterium smegmatis).